The primary structure comprises 281 residues: Lectin alpha chain (281 aa).

Asn-35, Asn-82, and Asn-140 each carry an N-linked (GlcNAc...) asparagine glycan.

This sequence belongs to the leguminous lectin family. Tetramer of 2 alpha and 2 beta chains. In terms of processing, glycosylated. Post-translationally, the beta chain is produced by partial proteolytic processing of the alpha chain.

In terms of biological role, D-galactose-binding lectin. This is Lectin alpha chain from Lablab purpureus (Hyacinth bean).